A 183-amino-acid chain; its full sequence is Large ribosomal subunit protein bL17 (183 aa).

Residues 130-150 show a composition bias toward basic and acidic residues; the sequence is GTKFAKDEKAKAEATEAKAEE. The tract at residues 130–183 is disordered; the sequence is GTKFAKDEKAKAEATEAKAEETTETTESTEAESTEAPAEEAKAEDTAAEKKDES. Residues 151 to 162 show a composition bias toward acidic residues; the sequence is TTETTESTEAES. Residues 168-183 are compositionally biased toward basic and acidic residues; it reads EEAKAEDTAAEKKDES.

This sequence belongs to the bacterial ribosomal protein bL17 family. Part of the 50S ribosomal subunit. Contacts protein L32.

In Saccharopolyspora erythraea (strain ATCC 11635 / DSM 40517 / JCM 4748 / NBRC 13426 / NCIMB 8594 / NRRL 2338), this protein is Large ribosomal subunit protein bL17.